The sequence spans 479 residues: Poly(A) polymerase catalytic subunit (479 aa).

Active-site residues include Asp-202 and Asp-204. 3 residues coordinate Ca(2+): Asp-202, Asp-204, and Asp-253.

The protein belongs to the poxviridae poly(A) polymerase catalytic subunit family. Heterodimer of a large (catalytic) subunit and a small (regulatory) subunit.

It carries out the reaction RNA(n) + ATP = RNA(n)-3'-adenine ribonucleotide + diphosphate. Its function is as follows. Polymerase that creates the 3'-poly(A) tail of mRNA's. In Bos taurus (Bovine), this protein is Poly(A) polymerase catalytic subunit (OPG063).